Consider the following 315-residue polypeptide: Zinc transport protein ZntB (315 aa).

The Cytoplasmic portion of the chain corresponds to 1–250 (MGFMIEHWDF…RDEKTNKNSY (250 aa)). Residues 251–271 (LFTLVATIFLPTSFLTGLLGI) traverse the membrane as a helical segment. At 272–282 (NIGGMPGVESS) the chain is on the periplasmic side. The helical transmembrane segment at 283 to 303 (MAFTWFCIALIVIFGLEWLLF) threads the bilayer. Residues 304-315 (KRLGFTNKTDDE) lie on the Cytoplasmic side of the membrane.

Belongs to the CorA metal ion transporter (MIT) (TC 1.A.35) family. Homopentamer. Can assemble pentamers in the absence of the transmembrane regions.

Its subcellular location is the cell inner membrane. The catalysed reaction is Zn(2+)(out) + H(+)(out) = Zn(2+)(in) + H(+)(in). In terms of biological role, zinc transporter. Acts as a Zn(2+):proton symporter, which likely mediates zinc ion uptake. This chain is Zinc transport protein ZntB, found in Vibrio parahaemolyticus serotype O3:K6 (strain RIMD 2210633).